The sequence spans 263 residues: Putative S-adenosyl-L-methionine-dependent methyltransferase Mkms_0098 (263 aa).

S-adenosyl-L-methionine-binding positions include aspartate 121 and 150 to 151 (ES).

This sequence belongs to the UPF0677 family.

Exhibits S-adenosyl-L-methionine-dependent methyltransferase activity. The chain is Putative S-adenosyl-L-methionine-dependent methyltransferase Mkms_0098 from Mycobacterium sp. (strain KMS).